The chain runs to 513 residues: ATP synthase subunit alpha (513 aa).

Position 171-178 (171-178 (GDRQIGKT)) interacts with ATP.

The protein belongs to the ATPase alpha/beta chains family. As to quaternary structure, F-type ATPases have 2 components, CF(1) - the catalytic core - and CF(0) - the membrane proton channel. CF(1) has five subunits: alpha(3), beta(3), gamma(1), delta(1), epsilon(1). CF(0) has three main subunits: a(1), b(2) and c(9-12). The alpha and beta chains form an alternating ring which encloses part of the gamma chain. CF(1) is attached to CF(0) by a central stalk formed by the gamma and epsilon chains, while a peripheral stalk is formed by the delta and b chains.

The protein resides in the cell membrane. The catalysed reaction is ATP + H2O + 4 H(+)(in) = ADP + phosphate + 5 H(+)(out). In terms of biological role, produces ATP from ADP in the presence of a proton gradient across the membrane. The alpha chain is a regulatory subunit. This chain is ATP synthase subunit alpha, found in Wolbachia pipientis wMel.